A 299-amino-acid polypeptide reads, in one-letter code: Hairy/enhancer-of-split related with YRPW motif protein 1 (299 aa).

The segment at 1 to 53 (MKRAHPDYSSSDSELDETIEVEKESADENGNLSSALCSMSPTTSSQVLARKRR) is disordered. The span at 28–47 (ENGNLSSALCSMSPTTSSQV) shows a compositional bias: polar residues. Positions 48–117 (LARKRRRGII…GGKGYFDAHA (70 aa)) are transcriptional repression and interaction with NCOR1 and SIN3A. The 56-residue stretch at 49-104 (ARKRRRGIIEKRRRDRINNSLSELRRLVPSAFEKQGSAKLEKAEILQMTVDHLKML) folds into the bHLH domain. In terms of domain architecture, Orange spans 122–158 (YRSLGFRECLAEVARYLSIIEGLDASDPLLVRLVSHL). Residues 194-234 (LLLPQNGHGNAGTAASPTEPHHQGRLASAHPEAPALRAPPS) form a disordered region. Positions 289–292 (YRPW) match the YRPW motif motif.

Belongs to the HEY family. As to quaternary structure, may self-associate. Interacts with HES1, NCOR1 and SIN3A. Interacts with GATA4, GATA6 and HDAC1 and HEYL. Interacts with CCDC89/BOIP. As to expression, expressed in somitic mesoderm, brain, central nervous system, kidney, heart, nasal epithelium, limbs, lung, muscle, ovary and testis.

The protein localises to the nucleus. Transcriptional repressor which binds preferentially to the canonical E box sequence 5'-CACGTG-3'. Downstream effector of Notch signaling required for cardiovascular development. Specifically required for the Notch-induced endocardial epithelial to mesenchymal transition, which is itself criticial for cardiac valve and septum development. May be required in conjunction with HEY2 to specify arterial cell fate or identity. Promotes maintenance of neuronal precursor cells and glial versus neuronal fate specification. Represses transcription by the cardiac transcriptional activators GATA4 and GATA6 and by the neuronal bHLH factors ASCL1/MASH1 and NEUROD4/MATH3. In Mus musculus (Mouse), this protein is Hairy/enhancer-of-split related with YRPW motif protein 1 (Hey1).